Here is a 1005-residue protein sequence, read N- to C-terminus: Espin-like protein (1005 aa).

9 ANK repeats span residues 1 to 31 (MEKQ…GPGI), 35 to 64 (LGAG…LPGN), 69 to 99 (NGAT…GLQD), 103 to 132 (SGVS…SATL), 136 to 166 (EGAR…SVNR), 170 to 200 (SGAS…DVHL), 204 to 234 (DGMS…GLTA), 238 to 267 (EGAT…PILR), and 270 to 299 (WGGT…DPSL). Disordered regions lie at residues 333-444 (LMTP…ERGQ) and 462-483 (LGAE…TEQA). A compositionally biased stretch (pro residues) spans 334 to 346 (MTPPPPPFPPPPL). Positions 468 to 480 (AEAQDNGGSSGPT) are enriched in polar residues. Positions 517 to 541 (LQLRRRCQEYESELGRLAAELQALL) form a coiled coil. Disordered regions lie at residues 616–644 (GDEK…AQRQ), 695–730 (RSGL…AAAG), and 773–795 (LRGQ…PRLG).

In terms of assembly, interacts with MYO3A (via C-terminus). Interacts with MYO3B (via C-terminus).

The protein localises to the cell projection. Its subcellular location is the stereocilium. In terms of biological role, binds to but does not cross-link actin. Required for the formation and maintenance of inner ear hair cell stereocilia and staircase formation. Essential for normal hearing. The polypeptide is Espin-like protein (ESPNL) (Homo sapiens (Human)).